An 832-amino-acid chain; its full sequence is Subtilisin-like protease SBT2.4 (832 aa).

The N-terminal stretch at 1 to 27 is a signal peptide; it reads METNPRKLRSYSYICLIVCIFVLVVCA. The region spanning 74–138 is the Inhibitor I9 domain; it reads EAKKIEEIHD…VEEDKGVKLM (65 aa). Residues 150 to 690 form the Peptidase S8 domain; that stretch reads QQVWQKISNE…AGHVNPARAL (541 aa). Asp-174 serves as the catalytic Charge relay system. Asn-196 and Asn-238 each carry an N-linked (GlcNAc...) asparagine glycan. The active-site Charge relay system is the His-252. Positions 425-524 constitute a PA domain; it reads TNGSVLQPLT…SAAQIILRYY (100 aa). Asn-426 is a glycosylation site (N-linked (GlcNAc...) asparagine). The active-site Charge relay system is Ser-618. Residues Asn-761, Asn-774, and Asn-800 are each glycosylated (N-linked (GlcNAc...) asparagine).

It belongs to the peptidase S8 family.

The protein resides in the secreted. Functionally, serine protease required for epidermal surface formation in embryos and juvenile plants. Involved in embryonic cuticle formation downstream of BHLH95/ZOU. This chain is Subtilisin-like protease SBT2.4, found in Arabidopsis thaliana (Mouse-ear cress).